A 354-amino-acid chain; its full sequence is GTPase Obg (354 aa).

The Obg domain occupies 1–159 (MKFVDEVKIH…RDLVLELKLL (159 aa)). The region spanning 160 to 333 (ADVGIVGYPN…LLDAVGRALF (174 aa)) is the OBG-type G domain. Residues 166–173 (GYPNAGKS), 191–195 (FTTLT), 212–215 (DIPG), 283–286 (TKID), and 314–316 (SAV) contribute to the GTP site. Residues Ser-173 and Thr-193 each coordinate Mg(2+).

It belongs to the TRAFAC class OBG-HflX-like GTPase superfamily. OBG GTPase family. In terms of assembly, monomer. Mg(2+) serves as cofactor.

Its subcellular location is the cytoplasm. In terms of biological role, an essential GTPase which binds GTP, GDP and possibly (p)ppGpp with moderate affinity, with high nucleotide exchange rates and a fairly low GTP hydrolysis rate. Plays a role in control of the cell cycle, stress response, ribosome biogenesis and in those bacteria that undergo differentiation, in morphogenesis control. This Anaeromyxobacter dehalogenans (strain 2CP-C) protein is GTPase Obg.